Consider the following 412-residue polypeptide: MPDIFTDNTDKQDSDPSRQGFEGQPNVVIVRYGELALKSTGVRNWYEKILMKNIAAMLDSRNIPYSLLRREWGRIFIETTDPRAAEAAADVFGVVSTSPALVTKPDLESAARTCAFLGTGLIREGESFAIRARRSGNHPFSSADVGRNCGDAVWDSLEKEGKHPRVNLTSPDKEIFVEMRQNLAYVYLETVKGVGGLPLGTQGSMVVLMSGGLDSPVAAWLMMKRGVMITPVYCNNSPYAEDAARERAFDCIRQLQTWAPGHQFATYEIPHGPNLRAFIGTCDRKNTCLLCKRMMYREAYEVMKKVGASGIITGSSLGQVASQTAANMHAEIYQLAIPIYHPLIAFDKSEIVDIARRIGTYDISTRPAGICTAVPERPEVKANYDLIVLEEKKLGIETMVGDALKAVKILKL.

A disordered region spans residues 1 to 22 (MPDIFTDNTDKQDSDPSRQGFE). The 109-residue stretch at 82–190 (PRAAEAAADV…QNLAYVYLET (109 aa)) folds into the THUMP domain. ATP is bound by residues 208–209 (LM), Lys-292, Gly-314, and Gln-323.

The protein belongs to the ThiI family.

It is found in the cytoplasm. The catalysed reaction is [ThiI sulfur-carrier protein]-S-sulfanyl-L-cysteine + a uridine in tRNA + 2 reduced [2Fe-2S]-[ferredoxin] + ATP + H(+) = [ThiI sulfur-carrier protein]-L-cysteine + a 4-thiouridine in tRNA + 2 oxidized [2Fe-2S]-[ferredoxin] + AMP + diphosphate. It catalyses the reaction [ThiS sulfur-carrier protein]-C-terminal Gly-Gly-AMP + S-sulfanyl-L-cysteinyl-[cysteine desulfurase] + AH2 = [ThiS sulfur-carrier protein]-C-terminal-Gly-aminoethanethioate + L-cysteinyl-[cysteine desulfurase] + A + AMP + 2 H(+). It functions in the pathway cofactor biosynthesis; thiamine diphosphate biosynthesis. Catalyzes the ATP-dependent transfer of a sulfur to tRNA to produce 4-thiouridine in position 8 of tRNAs, which functions as a near-UV photosensor. Also catalyzes the transfer of sulfur to the sulfur carrier protein ThiS, forming ThiS-thiocarboxylate. This is a step in the synthesis of thiazole, in the thiamine biosynthesis pathway. The sulfur is donated as persulfide by IscS. The polypeptide is Probable tRNA sulfurtransferase (Methanosarcina acetivorans (strain ATCC 35395 / DSM 2834 / JCM 12185 / C2A)).